A 511-amino-acid chain; its full sequence is Glycerol kinase (511 aa).

Residue T11 participates in ADP binding. Residues T11, S12, and S13 each contribute to the ATP site. Residue T11 participates in sn-glycerol 3-phosphate binding. Residue R15 coordinates ADP. R81, E82, Y133, and D242 together coordinate sn-glycerol 3-phosphate. Glycerol-binding residues include R81, E82, Y133, D242, and Q243. ADP is bound by residues T264 and G321. 4 residues coordinate ATP: T264, G321, Q325, and G426. Positions 426 and 430 each coordinate ADP.

Belongs to the FGGY kinase family.

It carries out the reaction glycerol + ATP = sn-glycerol 3-phosphate + ADP + H(+). The protein operates within polyol metabolism; glycerol degradation via glycerol kinase pathway; sn-glycerol 3-phosphate from glycerol: step 1/1. With respect to regulation, inhibited by fructose 1,6-bisphosphate (FBP). Key enzyme in the regulation of glycerol uptake and metabolism. Catalyzes the phosphorylation of glycerol to yield sn-glycerol 3-phosphate. This Verminephrobacter eiseniae (strain EF01-2) protein is Glycerol kinase.